The sequence spans 120 residues: Large ribosomal subunit protein uL18 (120 aa).

This sequence belongs to the universal ribosomal protein uL18 family. In terms of assembly, part of the 50S ribosomal subunit; part of the 5S rRNA/L5/L18/L25 subcomplex. Contacts the 5S and 23S rRNAs.

In terms of biological role, this is one of the proteins that bind and probably mediate the attachment of the 5S RNA into the large ribosomal subunit, where it forms part of the central protuberance. This chain is Large ribosomal subunit protein uL18, found in Lawsonia intracellularis (strain PHE/MN1-00).